Here is a 4218-residue protein sequence, read N- to C-terminus: Protein Obscurin (4218 aa).

Residues 3–71 (AVADIVFVSR…PIDILEFNPT (69 aa)) form the SH3 domain. A DH domain is found at 86–264 (RKLTILRELV…LSVPSRAYDN (179 aa)). Residues 439–466 (SKETKERLQHEQQELLKLEQEAIELYKK) adopt a coiled-coil conformation. Disordered regions lie at residues 465 to 592 (KKQQ…SHSK), 684 to 703 (SLRD…QQGY), 728 to 750 (SGAN…NFTR), and 923 to 1010 (RYET…EDRP). 2 stretches are compositionally biased toward low complexity: residues 466 to 490 (KQQS…VKSS) and 505 to 517 (AQVK…KVVS). The segment covering 578 to 592 (KEVRKEVPPSASHSK) has biased composition (basic and acidic residues). A compositionally biased stretch (basic and acidic residues) spans 923 to 935 (RYETKTRDYDRGT). A compositionally biased stretch (polar residues) spans 936-948 (SYDSTVERSQYGI). Composition is skewed to basic and acidic residues over residues 950–962 (SRRD…KVEA) and 972–986 (TESR…RAES). Positions 987-996 (RASYSVAESR) are enriched in low complexity. Ig-like C2-type domains lie at 1017–1103 (PVVV…TTVS), 1152–1298 (PRVK…AELS), 1313–1400 (PTLV…SSIN), 1504–1594 (PVIV…TQLL), 1599–1689 (PEFT…CVVT), 1694–1785 (PKVK…CKVA), 1815–1906 (PEIV…LSLS), 2018–2107 (PEIS…FNLA), 2113–2214 (PTFI…FKLA), 2220–2305 (PSFV…EKVA), 2318–2409 (PKFL…VEIV), 2415–2505 (PVFV…AKLY), 2519–2609 (PQFV…ANVR), 2614–2698 (PPVF…KDIT), and 2716–2792 (PPVF…SCRI). Cysteines 1199 and 1282 form a disulfide. Cysteines 2739 and 2790 form a disulfide. In terms of domain architecture, Fibronectin type-III 1 spans 2832-2933 (APPPLSEGPI…TYRQKLVPDP (102 aa)). The Protein kinase 1 domain occupies 3186–3440 (YDIGDELGRG…VKTALKHPWF (255 aa)). The ATP site is built by Gly-3198, Lys-3215, Glu-3260, Ala-3262, Glu-3266, Lys-3310, and Asp-3326. The 85-residue stretch at 3654-3738 (PFFREKPQTI…ARNKVGQTVA (85 aa)) folds into the Ig-like C2-type 16 domain. Positions 3750-3843 (APDSPEISAN…IPVSASTVGG (94 aa)) constitute a Fibronectin type-III 2 domain. The region spanning 3897–4151 (YSFISEIARG…TEDCLEHRWL (255 aa)) is the Protein kinase 2 domain.

It belongs to the protein kinase superfamily. CAMK Ser/Thr protein kinase family. In terms of assembly, interacts with myosin. May interact (via protein kinase domain 1) with ball. May interact (via protein kinase domain 1 or 2) with mask. May interact (via protein kinase domain 2) with Tm1/tropomyosin-1. As to expression, expressed in the thoracic muscles including the indirect flight muscles (IFM) (at protein level).

Its subcellular location is the cytoplasm. It localises to the myofibril. The protein localises to the sarcomere. It is found in the m line. Functionally, structural component of the muscle M line which is involved in assembly and organization of sarcomere. Required for the development and organization of indirect flight muscle sarcomeres by regulating the formation of M line and H zone and the correct assembly of thick and thin filaments in the sarcomere. Lacks serine/threonine-protein kinase activity. The sequence is that of Protein Obscurin from Drosophila melanogaster (Fruit fly).